A 371-amino-acid polypeptide reads, in one-letter code: uncharacterized protein (371 aa).

The 31-residue stretch at 110–140 (MEKFIDFDRCNKCGECARKICKAKWTPLNYL) folds into the 4Fe-4S ferredoxin-type domain.

This is an uncharacterized protein from Methanocaldococcus jannaschii (strain ATCC 43067 / DSM 2661 / JAL-1 / JCM 10045 / NBRC 100440) (Methanococcus jannaschii).